Consider the following 126-residue polypeptide: Small ribosomal subunit protein bS6 (126 aa).

The disordered stretch occupies residues 101-126; the sequence is VMMKAKEERTAKREDAAPRAEEAAAE. Basic and acidic residues predominate over residues 104–126; sequence KAKEERTAKREDAAPRAEEAAAE.

The protein belongs to the bacterial ribosomal protein bS6 family.

Its function is as follows. Binds together with bS18 to 16S ribosomal RNA. The sequence is that of Small ribosomal subunit protein bS6 from Aliivibrio salmonicida (strain LFI1238) (Vibrio salmonicida (strain LFI1238)).